The following is a 145-amino-acid chain: Small ribosomal subunit protein uS19 (145 aa).

A2 is modified (N-acetylalanine). K108 participates in a covalent cross-link: Glycyl lysine isopeptide (Lys-Gly) (interchain with G-Cter in SUMO2).

Belongs to the universal ribosomal protein uS19 family. In terms of assembly, component of the small ribosomal subunit.

The protein resides in the cytoplasm. In terms of biological role, component of the small ribosomal subunit. The ribosome is a large ribonucleoprotein complex responsible for the synthesis of proteins in the cell. In Mesocricetus auratus (Golden hamster), this protein is Small ribosomal subunit protein uS19 (RPS15).